The chain runs to 489 residues: Coiled-coil domain-containing protein 77 (489 aa).

Ser-38 is modified (phosphoserine). Coiled-coil stretches lie at residues 57 to 120 (SQEL…QVCL) and 212 to 487 (ERHQ…NALR).

This is Coiled-coil domain-containing protein 77 (Ccdc77) from Mus musculus (Mouse).